A 270-amino-acid chain; its full sequence is Bark lectin (270 aa).

The signal sequence occupies residues 1 to 15 (ISITFFLLLLNKVNS). 3 N-linked (GlcNAc...) asparagine glycosylation sites follow: N60, N76, and N127. Mn(2+)-binding residues include E141 and D143. Ca(2+) is bound by residues D143, H145, N147, and D150. 2 residues coordinate Mn(2+): D150 and H155. N201 is a glycosylation site (N-linked (GlcNAc...) asparagine).

The protein belongs to the leguminous lectin family.

GalNAc-specific lectin. The sequence is that of Bark lectin from Styphnolobium japonicum (Japanese pagoda tree).